The sequence spans 282 residues: U1 small nuclear ribonucleoprotein A (282 aa).

2 consecutive RRM domains span residues 10-89 and 208-282; these read NTIY…YSKT and HILF…FAKK.

This sequence belongs to the RRM U1 A/B'' family. In terms of assembly, U1 snRNP is composed of the 7 core Sm proteins snrpb, snrpd1, snrpd2, snrpd3, snrpe, snrpf and snrpg that assemble in a heptameric protein ring on the Sm site of the small nuclear RNA to form the core snRNP, and at least three U1 snRNP-specific proteins snrnp70/U1-70K, snrpa/U1-A and snrpc/U1-C.

Its subcellular location is the nucleus. In terms of biological role, component of the spliceosomal U1 snRNP, which is essential for recognition of the pre-mRNA 5' splice-site and the subsequent assembly of the spliceosome. U1 snRNP is the first snRNP to interact with pre-mRNA. This interaction is required for the subsequent binding of U2 snRNP and the U4/U6/U5 tri-snRNP. Snrpa binds stem loop II of U1 snRNA. This chain is U1 small nuclear ribonucleoprotein A (snrpa), found in Xenopus laevis (African clawed frog).